A 350-amino-acid polypeptide reads, in one-letter code: tRNA uridine(34) hydroxylase (350 aa).

The region spanning D146–L240 is the Rhodanese domain. C200 acts as the Cysteine persulfide intermediate in catalysis.

The protein belongs to the TrhO family.

It carries out the reaction uridine(34) in tRNA + AH2 + O2 = 5-hydroxyuridine(34) in tRNA + A + H2O. Catalyzes oxygen-dependent 5-hydroxyuridine (ho5U) modification at position 34 in tRNAs. This Yersinia enterocolitica serotype O:8 / biotype 1B (strain NCTC 13174 / 8081) protein is tRNA uridine(34) hydroxylase.